Here is a 131-residue protein sequence, read N- to C-terminus: Holo-[acyl-carrier-protein] synthase (131 aa).

2 residues coordinate Mg(2+): D6 and E55.

It belongs to the P-Pant transferase superfamily. AcpS family. Mg(2+) is required as a cofactor.

The protein resides in the cytoplasm. It carries out the reaction apo-[ACP] + CoA = holo-[ACP] + adenosine 3',5'-bisphosphate + H(+). Functionally, transfers the 4'-phosphopantetheine moiety from coenzyme A to a Ser of acyl-carrier-protein. This is Holo-[acyl-carrier-protein] synthase from Verminephrobacter eiseniae (strain EF01-2).